Reading from the N-terminus, the 211-residue chain is Protein-L-isoaspartate O-methyltransferase (211 aa).

Residue S60 is part of the active site.

This sequence belongs to the methyltransferase superfamily. L-isoaspartyl/D-aspartyl protein methyltransferase family.

It localises to the cytoplasm. The enzyme catalyses [protein]-L-isoaspartate + S-adenosyl-L-methionine = [protein]-L-isoaspartate alpha-methyl ester + S-adenosyl-L-homocysteine. Its function is as follows. Catalyzes the methyl esterification of L-isoaspartyl residues in peptides and proteins that result from spontaneous decomposition of normal L-aspartyl and L-asparaginyl residues. It plays a role in the repair and/or degradation of damaged proteins. This is Protein-L-isoaspartate O-methyltransferase from Pseudomonas fluorescens (strain ATCC BAA-477 / NRRL B-23932 / Pf-5).